An 87-amino-acid polypeptide reads, in one-letter code: Citrate lyase acyl carrier protein (87 aa).

Position 14 is an O-(phosphoribosyl dephospho-coenzyme A)serine (Ser14).

The protein belongs to the CitD family. In terms of assembly, oligomer with a subunit composition of (alpha,beta,gamma)6.

Its subcellular location is the cytoplasm. Its function is as follows. Covalent carrier of the coenzyme of citrate lyase. The sequence is that of Citrate lyase acyl carrier protein from Treponema denticola (strain ATCC 35405 / DSM 14222 / CIP 103919 / JCM 8153 / KCTC 15104).